A 396-amino-acid polypeptide reads, in one-letter code: MSGDEVQFHENYDDYITYLKRRIRQLELQVRMLEADKERLERELSRLRSEMSRLRQPPAFAGTVIEVLDDDRAIVQNYNGPRFVVRIAPWIERDKLRPGARVALDQRTMAIIELLPSSKDPTVLGFEVIERPNVTYNDIGGLKKQLQELREAIELPLKHPELFEEVGIDPPKGVLLYGPPGCGKTLMAKALAHEVNATFIRVVGSELVRKYIGEGARLVHELFELAKEKAPTIIFIDEIDAIGAKRMDETTGGEREVNRTLMQLLAEMDGFDPRGNVKVIAATNRPDILDPALLRPGRFDRLIEVPLPDFEGRLEILKVHTRRMKLKNVDLRVIAEITEGASGADLKAIATEAGMFAIRERRTYVTQEDFLKAVDKVLGNERKLLQQITSHEIIYG.

A coiled-coil region spans residues 16-57 (ITYLKRRIRQLELQVRMLEADKERLERELSRLRSEMSRLRQP). ATP is bound by residues 181–186 (GCGKTL) and histidine 320. Residues 394-396 (IYG) form a docks into pockets in the proteasome alpha-ring to cause gate opening region.

It belongs to the AAA ATPase family. In terms of assembly, homohexamer. The hexameric complex has a two-ring architecture resembling a top hat that caps the 20S proteasome core at one or both ends. Upon ATP-binding, the C-terminus of PAN interacts with the alpha-rings of the proteasome core by binding to the intersubunit pockets.

Its subcellular location is the cytoplasm. ATPase which is responsible for recognizing, binding, unfolding and translocation of substrate proteins into the archaeal 20S proteasome core particle. Is essential for opening the gate of the 20S proteasome via an interaction with its C-terminus, thereby allowing substrate entry and access to the site of proteolysis. Thus, the C-termini of the proteasomal ATPase function like a 'key in a lock' to induce gate opening and therefore regulate proteolysis. Unfolding activity requires energy from ATP hydrolysis, whereas ATP binding alone promotes ATPase-20S proteasome association which triggers gate opening, and supports translocation of unfolded substrates. The polypeptide is Proteasome-activating nucleotidase (Pyrococcus abyssi (strain GE5 / Orsay)).